The following is a 163-amino-acid chain: Cyclic pyranopterin monophosphate synthase (163 aa).

Substrate contacts are provided by residues 79–81 (LCH) and 118–119 (ME). The active site involves Asp133.

It belongs to the MoaC family. In terms of assembly, homohexamer; trimer of dimers.

The catalysed reaction is (8S)-3',8-cyclo-7,8-dihydroguanosine 5'-triphosphate = cyclic pyranopterin phosphate + diphosphate. It participates in cofactor biosynthesis; molybdopterin biosynthesis. Its function is as follows. Catalyzes the conversion of (8S)-3',8-cyclo-7,8-dihydroguanosine 5'-triphosphate to cyclic pyranopterin monophosphate (cPMP). This chain is Cyclic pyranopterin monophosphate synthase, found in Nocardioides sp. (strain ATCC BAA-499 / JS614).